Here is a 469-residue protein sequence, read N- to C-terminus: MLCLCLYVPIAGEAQTEFQYFESKGLPTELKSIFKLSVFIPSQEFSTYRQWKQKIVQAGDKDLDGQLDFEEFVHYLQDHEKKLRLVFKSLDKKNDGRIDAQEIMQSLRDLGVKISEQQAEKILKSMDKNGTMTIDWNEWRDYHLLHPVENIPEIILYWKHSTIFDVGENLTVPDEFTVEERQTGMWWRHLVAGGGAGAVSRTCTAPLDRLKVLMQVHASRSNNMCIIGGFTQMIREGGAKSLWRGNGINVLKIAPESAIKFMAYEQMKRLVGSDQETLRIHERLVAGSLAGAIAQSSIYPMEVLKTRMALRKTGQYSGMLDCAKRILAKEGVAAFYKGYIPNMLGIIPYAGIDLAVYETLKNTWLQRYAVNSADPGVFVLLACGTISSTCGQLASYPLALVRTRMQAQASIEGAPEVTMSSLFKQILRTEGAFGLYRGLAPNFMKVIPAVSISYVVYENLKITLGVQSR.

A regulatory N-terminal domain region spans residues 1–165 (MLCLCLYVPI…LYWKHSTIFD (165 aa)). Topologically, residues 1 to 189 (MLCLCLYVPI…ERQTGMWWRH (189 aa)) are mitochondrial intermembrane. 3 EF-hand domains span residues 47 to 80 (TYRQ…QDHE), 78 to 113 (DHEK…LGVK), and 114 to 149 (ISEQ…HPVE). Positions 60, 62, 64, 66, and 71 each coordinate Ca(2+). The segment at 151–160 (IPEIILYWKH) is linker region. The interval 166–469 (VGENLTVPDE…LKITLGVQSR (304 aa)) is C-terminal transmembrane transporter domain. 3 Solcar repeats span residues 184–270 (GMWW…MKRL), 278–363 (LRIH…LKNT), and 375–463 (PGVF…LKIT). Residues 190-207 (LVAGGGAGAVSRTCTAPL) traverse the membrane as a helical segment. At 208–244 (DRLKVLMQVHASRSNNMCIIGGFTQMIREGGAKSLWR) the chain is on the mitochondrial matrix side. Residues 245-264 (GNGINVLKIAPESAIKFMAY) form a helical membrane-spanning segment. The Mitochondrial intermembrane portion of the chain corresponds to 265–287 (EQMKRLVGSDQETLRIHERLVAG). Residues 288 to 301 (SLAGAIAQSSIYPM) traverse the membrane as a helical segment. Over 302–337 (EVLKTRMALRKTGQYSGMLDCAKRILAKEGVAAFYK) the chain is Mitochondrial matrix. A helical membrane pass occupies residues 338 to 357 (GYIPNMLGIIPYAGIDLAVY). Topologically, residues 358–380 (ETLKNTWLQRYAVNSADPGVFVL) are mitochondrial intermembrane. The helical transmembrane segment at 381 to 398 (LACGTISSTCGQLASYPL) threads the bilayer. The Mitochondrial matrix portion of the chain corresponds to 399-437 (ALVRTRMQAQASIEGAPEVTMSSLFKQILRTEGAFGLYR). Residues 438–457 (GLAPNFMKVIPAVSISYVVY) form a helical membrane-spanning segment. At 458 to 469 (ENLKITLGVQSR) the chain is on the mitochondrial intermembrane side.

It belongs to the mitochondrial carrier (TC 2.A.29) family. In terms of tissue distribution, mainly present in the liver and the skeletal muscle (at protein level).

It localises to the mitochondrion inner membrane. The catalysed reaction is Mg(2+)(out) + phosphate(in) + ATP(out) = Mg(2+)(in) + phosphate(out) + ATP(in). Activated by an increase in cytosolic calcium levels that induce a conformational change of the N-terminal regulatory domain, uncapping the channel and allowing transport. Electroneutral antiporter that most probably mediates the transport of adenyl nucleotides through the inner mitochondrial membrane. Originally identified as an ATP-magnesium/inorganic phosphate antiporter, it could have a broader specificity for adenyl nucleotides. By regulating the mitochondrial matrix adenyl nucleotide pool could adapt to changing cellular energetic demands and indirectly regulate adenyl nucleotide-dependent metabolic pathways. In Rattus norvegicus (Rat), this protein is Mitochondrial adenyl nucleotide antiporter SLC25A25.